The following is a 210-amino-acid chain: LexA repressor (210 aa).

Residues Ala25 to Asn44 constitute a DNA-binding region (H-T-H motif). Active-site for autocatalytic cleavage activity residues include Ser120 and Lys159.

This sequence belongs to the peptidase S24 family. As to quaternary structure, homodimer.

It catalyses the reaction Hydrolysis of Ala-|-Gly bond in repressor LexA.. Its function is as follows. Represses a number of genes involved in the response to DNA damage (SOS response), including recA and lexA. In the presence of single-stranded DNA, RecA interacts with LexA causing an autocatalytic cleavage which disrupts the DNA-binding part of LexA, leading to derepression of the SOS regulon and eventually DNA repair. The protein is LexA repressor of Deinococcus radiodurans (strain ATCC 13939 / DSM 20539 / JCM 16871 / CCUG 27074 / LMG 4051 / NBRC 15346 / NCIMB 9279 / VKM B-1422 / R1).